The sequence spans 226 residues: Oxaloacetate tautomerase FAHD2, mitochondrial (226 aa).

The transit peptide at 1–30 (MAAAAQRLLAASTKIVGVGRNFVAHAKELG) directs the protein to the mitochondrion. Mg(2+)-binding residues include E69, E71, and D100.

It belongs to the FAH family. It depends on Mg(2+) as a cofactor. Requires Mn(2+) as cofactor.

It localises to the mitochondrion. The catalysed reaction is oxaloacetate = enol-oxaloacetate. In terms of biological role, tautomerase that converts enol-oxaloacetate, a strong inhibitor of succinate dehydrogenase, to the physiological keto form of oxaloacetate. The protein is Oxaloacetate tautomerase FAHD2, mitochondrial of Oryza sativa subsp. japonica (Rice).